We begin with the raw amino-acid sequence, 264 residues long: Phosphonoacetaldehyde hydrolase (264 aa).

The active-site Nucleophile is Asp9. Mg(2+) is bound by residues Asp9 and Ala11. Residue Lys50 is the Schiff-base intermediate with substrate of the active site. Asp183 is a binding site for Mg(2+).

This sequence belongs to the HAD-like hydrolase superfamily. PhnX family. In terms of assembly, homodimer. Mg(2+) is required as a cofactor.

It catalyses the reaction phosphonoacetaldehyde + H2O = acetaldehyde + phosphate + H(+). Functionally, involved in phosphonate degradation. The protein is Phosphonoacetaldehyde hydrolase of Bacillus cytotoxicus (strain DSM 22905 / CIP 110041 / 391-98 / NVH 391-98).